The sequence spans 432 residues: uncharacterized protein (432 aa).

Residues 1 to 14 are compositionally biased toward polar residues; it reads MSDTTDVPENQKSP. The interval 1–42 is disordered; it reads MSDTTDVPENQKSPKPSGKADKRKIEEKPENSSLKRKKFEDP. Residues 18 to 30 are compositionally biased toward basic and acidic residues; the sequence is GKADKRKIEEKPE. Residues 85 to 148 form the S4 RNA-binding domain; that stretch reads RKMVEVFSGE…HEHPIRDLPI (64 aa). The active site involves D199.

Belongs to the pseudouridine synthase RluA family.

This is an uncharacterized protein from Caenorhabditis elegans.